Here is a 430-residue protein sequence, read N- to C-terminus: Tol-Pal system protein TolB (430 aa).

The signal sequence occupies residues 1 to 21 (MKQALRVAFGFLILWASVLHA).

This sequence belongs to the TolB family. The Tol-Pal system is composed of five core proteins: the inner membrane proteins TolA, TolQ and TolR, the periplasmic protein TolB and the outer membrane protein Pal. They form a network linking the inner and outer membranes and the peptidoglycan layer.

The protein localises to the periplasm. Part of the Tol-Pal system, which plays a role in outer membrane invagination during cell division and is important for maintaining outer membrane integrity. TolB occupies a key intermediary position in the Tol-Pal system because it communicates directly with both membrane-embedded components, Pal in the outer membrane and TolA in the inner membrane. The protein is Tol-Pal system protein TolB of Shigella flexneri.